Here is a 112-residue protein sequence, read N- to C-terminus: MCGGCVQQEYPDRGSTCLETGSYLLNYVSCVQCNKRDFVLIVNKTAAEEDGEEIITYDHMCKNCHHVIAKHEYTFSVVDDYQEYTMLCMLCGRAEDSVSVLPDDPRQMAPLF.

11 residues coordinate Zn(2+): Cys-2, Cys-5, Cys-30, Cys-33, His-59, Cys-61, Cys-64, His-66, His-71, Cys-88, and Cys-91.

The protein belongs to the Churchill family.

In terms of biological role, transcriptional activator that mediates FGF signaling during neural development. Plays a role in the regulation of cell movement. Does not bind DNA by itself. The chain is Protein Churchill (churc1) from Xenopus laevis (African clawed frog).